The following is a 675-amino-acid chain: tRNA 5-methylaminomethyl-2-thiouridine biosynthesis bifunctional protein MnmC (675 aa).

Positions 1–245 are tRNA (mnm(5)s(2)U34)-methyltransferase; that stretch reads MANLPIQHAS…KREMLSGLLP (245 aa). Positions 271–675 are FAD-dependent cmnm(5)s(2)U34 oxidoreductase; the sequence is IGGGIASVLT…LLKGKPVTHD (405 aa).

The protein in the N-terminal section; belongs to the methyltransferase superfamily. tRNA (mnm(5)s(2)U34)-methyltransferase family. This sequence in the C-terminal section; belongs to the DAO family. It depends on FAD as a cofactor.

It localises to the cytoplasm. It catalyses the reaction 5-aminomethyl-2-thiouridine(34) in tRNA + S-adenosyl-L-methionine = 5-methylaminomethyl-2-thiouridine(34) in tRNA + S-adenosyl-L-homocysteine + H(+). Its function is as follows. Catalyzes the last two steps in the biosynthesis of 5-methylaminomethyl-2-thiouridine (mnm(5)s(2)U) at the wobble position (U34) in tRNA. Catalyzes the FAD-dependent demodification of cmnm(5)s(2)U34 to nm(5)s(2)U34, followed by the transfer of a methyl group from S-adenosyl-L-methionine to nm(5)s(2)U34, to form mnm(5)s(2)U34. In Pectobacterium atrosepticum (strain SCRI 1043 / ATCC BAA-672) (Erwinia carotovora subsp. atroseptica), this protein is tRNA 5-methylaminomethyl-2-thiouridine biosynthesis bifunctional protein MnmC.